We begin with the raw amino-acid sequence, 134 residues long: ATP synthase epsilon chain, chloroplastic (134 aa).

Belongs to the ATPase epsilon chain family. F-type ATPases have 2 components, CF(1) - the catalytic core - and CF(0) - the membrane proton channel. CF(1) has five subunits: alpha(3), beta(3), gamma(1), delta(1), epsilon(1). CF(0) has three main subunits: a, b and c.

Its subcellular location is the plastid. The protein localises to the chloroplast thylakoid membrane. Functionally, produces ATP from ADP in the presence of a proton gradient across the membrane. This chain is ATP synthase epsilon chain, chloroplastic, found in Nymphaea alba (White water-lily).